The sequence spans 153 residues: Endoribonuclease RegB (153 aa).

Activity is stimulated 10- to 100-fold by host ribosomal protein S1, which also helps confer substrate choice. Its function is as follows. Essential to the early nucleolytic processing of a number of T4 messenger RNAs. Specifically cleaves after the GG dinucleotide GGAG within consensus 5'-GGAGRAYARAA-3' (R is a purine and Y is a pyrimidine) sequences found mainly in translation initiation sites. The polypeptide is Endoribonuclease RegB (regB) (Enterobacteria phage T4 (Bacteriophage T4)).